The chain runs to 250 residues: 3-deoxy-manno-octulosonate cytidylyltransferase (250 aa).

It belongs to the KdsB family.

It localises to the cytoplasm. The catalysed reaction is 3-deoxy-alpha-D-manno-oct-2-ulosonate + CTP = CMP-3-deoxy-beta-D-manno-octulosonate + diphosphate. It participates in nucleotide-sugar biosynthesis; CMP-3-deoxy-D-manno-octulosonate biosynthesis; CMP-3-deoxy-D-manno-octulosonate from 3-deoxy-D-manno-octulosonate and CTP: step 1/1. It functions in the pathway bacterial outer membrane biogenesis; lipopolysaccharide biosynthesis. Functionally, activates KDO (a required 8-carbon sugar) for incorporation into bacterial lipopolysaccharide in Gram-negative bacteria. The sequence is that of 3-deoxy-manno-octulosonate cytidylyltransferase from Legionella pneumophila (strain Lens).